The following is a 264-amino-acid chain: MKGKSALTLLLAGIFSCGTCQATGAEVTSESVFNILNSTGAATDKSYLSLNPDKYPNYRLLIHSAKLQNEIKSHYTKDEIQGLLTLTENTRKLTLTEKPWGTFILASTFEDDKTAAETHYDAVWLRDSLWGYMALVSDQGNSVAAKKVLLTLWDYMSTPDQIKRMQDVISNPKRLDGIPVQMNAVHIRFDSNSPVMADVQEEGKPQLWNHKQNDALGLYLDLLIQAINTGTINAEDWQKGDRLKSVALLIAYLDKANFYVMEDS.

An N-terminal signal peptide occupies residues 1 to 16 (MKGKSALTLLLAGIFS). C17 carries the N-palmitoyl cysteine lipid modification. The S-diacylglycerol cysteine moiety is linked to residue C17.

It localises to the cell inner membrane. This is an uncharacterized protein from Escherichia coli (strain K12).